A 562-amino-acid chain; its full sequence is MLRSLALRTFANILGLSSRSGSTAAMSRNAVASRPHLYTTPIFYVNAAPHLGHVYSALLADVQHRYSAMCGIESKLSTGTDEHGMKVQQAASALGLDPQTFCSTVSLQFRTIFDALDISYTDFVRTTEPRHIEAVSRFWMTLEEQGYIYKGTYEGWYCTSDEAFLSEGQTAEHTDFEGNKIRVSLESGHQVHWVSEENYMFRLSSLRPALLNWLQTEPVHPAPFLKLVHHWLEEELPDLSVSRQRSRLSWGIPVPSDSSHVIYVWLDALVNYLTAAGYPNPQLAPWGPSTHLLGKDILRFHAIYWPAFLIAAGLPPPQKLLVHSHWTSEGTKMSKSLKNVVDPSDCIRRYTTDGLRYYLLRHGAPERDCDFTHRTARMLLNSELADALGGLLNRCTAPAINPMQHFPKFQYENFPVASRDQVHDLLGALQELPVEVDQWIKKFQVHKALECIDACVRRSNAFFQSQAPWKLQRGVEKEAALRDSVIYLTLEALRLYATLLHPAVPGLATVVLDRLGVPHKMRTLKKNTFLAATRGEICYFQAQTLGPDKGLLFPRLEKSEAF.

A mitochondrion-targeting transit peptide spans 1 to 10; the sequence is MLRSLALRTF. A 'HIGH' region motif is present at residues 43-53; it reads FYVNAAPHLGH. Positions 332–336 match the 'KMSKS' region motif; sequence KMSKS. Lys335 is an ATP binding site.

This sequence belongs to the class-I aminoacyl-tRNA synthetase family.

It localises to the mitochondrion matrix. It carries out the reaction tRNA(Met) + L-methionine + ATP = L-methionyl-tRNA(Met) + AMP + diphosphate. This Xenopus laevis (African clawed frog) protein is Methionine--tRNA ligase, mitochondrial (mars2).